The chain runs to 254 residues: Hydroxyacylglutathione hydrolase (254 aa).

7 residues coordinate Zn(2+): H52, H54, D56, H57, H109, D126, and H164.

The protein belongs to the metallo-beta-lactamase superfamily. Glyoxalase II family. Monomer. The cofactor is Zn(2+).

The enzyme catalyses an S-(2-hydroxyacyl)glutathione + H2O = a 2-hydroxy carboxylate + glutathione + H(+). Its pathway is secondary metabolite metabolism; methylglyoxal degradation; (R)-lactate from methylglyoxal: step 2/2. Its function is as follows. Thiolesterase that catalyzes the hydrolysis of S-D-lactoyl-glutathione to form glutathione and D-lactic acid. This Stenotrophomonas maltophilia (strain R551-3) protein is Hydroxyacylglutathione hydrolase.